Reading from the N-terminus, the 191-residue chain is Transcription factor FapR (191 aa).

It belongs to the FapR family.

Transcriptional factor involved in regulation of membrane lipid biosynthesis by repressing genes involved in fatty acid and phospholipid metabolism. This is Transcription factor FapR from Oceanobacillus iheyensis (strain DSM 14371 / CIP 107618 / JCM 11309 / KCTC 3954 / HTE831).